The primary structure comprises 381 residues: Queuine tRNA-ribosyltransferase (381 aa).

Residue D92 is the Proton acceptor of the active site. Substrate contacts are provided by residues D92–F96, D146, Q190, and G217. The interval G248–D254 is RNA binding. D267 serves as the catalytic Nucleophile. The tract at residues T272 to R276 is RNA binding; important for wobble base 34 recognition. 4 residues coordinate Zn(2+): C305, C307, C310, and H337.

It belongs to the queuine tRNA-ribosyltransferase family. In terms of assembly, homodimer. Within each dimer, one monomer is responsible for RNA recognition and catalysis, while the other monomer binds to the replacement base PreQ1. It depends on Zn(2+) as a cofactor.

It carries out the reaction 7-aminomethyl-7-carbaguanine + guanosine(34) in tRNA = 7-aminomethyl-7-carbaguanosine(34) in tRNA + guanine. It functions in the pathway tRNA modification; tRNA-queuosine biosynthesis. Its function is as follows. Catalyzes the base-exchange of a guanine (G) residue with the queuine precursor 7-aminomethyl-7-deazaguanine (PreQ1) at position 34 (anticodon wobble position) in tRNAs with GU(N) anticodons (tRNA-Asp, -Asn, -His and -Tyr). Catalysis occurs through a double-displacement mechanism. The nucleophile active site attacks the C1' of nucleotide 34 to detach the guanine base from the RNA, forming a covalent enzyme-RNA intermediate. The proton acceptor active site deprotonates the incoming PreQ1, allowing a nucleophilic attack on the C1' of the ribose to form the product. After dissociation, two additional enzymatic reactions on the tRNA convert PreQ1 to queuine (Q), resulting in the hypermodified nucleoside queuosine (7-(((4,5-cis-dihydroxy-2-cyclopenten-1-yl)amino)methyl)-7-deazaguanosine). The sequence is that of Queuine tRNA-ribosyltransferase from Xanthomonas axonopodis pv. citri (strain 306).